A 363-amino-acid chain; its full sequence is Phosphoserine aminotransferase (363 aa).

Arg-42 contacts L-glutamate. Pyridoxal 5'-phosphate is bound by residues 76–77 (GR), Trp-102, Thr-156, Asp-175, and Gln-198. Residue Lys-199 is modified to N6-(pyridoxal phosphate)lysine. Pyridoxal 5'-phosphate is bound at residue 240–241 (NT).

This sequence belongs to the class-V pyridoxal-phosphate-dependent aminotransferase family. SerC subfamily. In terms of assembly, homodimer. Pyridoxal 5'-phosphate is required as a cofactor.

It localises to the cytoplasm. It catalyses the reaction O-phospho-L-serine + 2-oxoglutarate = 3-phosphooxypyruvate + L-glutamate. The enzyme catalyses 4-(phosphooxy)-L-threonine + 2-oxoglutarate = (R)-3-hydroxy-2-oxo-4-phosphooxybutanoate + L-glutamate. Its pathway is amino-acid biosynthesis; L-serine biosynthesis; L-serine from 3-phospho-D-glycerate: step 2/3. The protein operates within cofactor biosynthesis; pyridoxine 5'-phosphate biosynthesis; pyridoxine 5'-phosphate from D-erythrose 4-phosphate: step 3/5. Functionally, catalyzes the reversible conversion of 3-phosphohydroxypyruvate to phosphoserine and of 3-hydroxy-2-oxo-4-phosphonooxybutanoate to phosphohydroxythreonine. This chain is Phosphoserine aminotransferase, found in Shewanella piezotolerans (strain WP3 / JCM 13877).